A 1374-amino-acid chain; its full sequence is MIVIRNWQRISYLSFCRFSTRSLSIQQFQKTPLLLVVRQQGSARLKMTSSPPEIVPQQPLDALLLNKTDTEQEIFLTKYPNYDGRDILIAILDTGVDPSLPGMQVTTTGERKMFDVIDCSGAGDVDTSITRTVKDGVIEGISGRKLAIPEKWKCPTGQYHVGLKPIFELYTKGVKSRVISERKEDVVGPSHNIAASEALKQLTEHEKVVGGTSEKTSDKWAREDFACKVDFLKSMASVADVGPVADVVTWHDGEMWRVCIDTSFRGRLGLGNVLGTFRETGDYAYLTNKDSVVYTVRVSPDGNLTEIVVPSGAHGSHVAGIAAANYPDNPQKNGLAPGAKILSLNIGDHRLGAMETGQAMTRAFNMCAELNVDIINMSFGEGTHLPDVGRVIEEARRLINRRGVIYVCSAGNQGPALSTVGAPGGTTTGVIGIGAYLTSESADTLYGVYKPVESSIYPWSSRGPCQDGKLGVSLVAPAAAFAGVPQYCRQSMQMMNGTSMSSPNAAGNVACMLSGLKQNNLKWTPYTVRMALENTAYMLPHIESFSQGQGMIKIATAYEKLSEILVNKVFPPRLTHFEINVSNHCKKSKGVYVREPNWNGPQEFTIGVEPIFQNHLSDNNLPAISFEKQIILQSTAPWVSHPQTMFVVAQERTMVVTVDASKAPKGANYTEIVGIDTADPSLGPIFRIPVTVINPEKVAVDQYTSRLVGKSGVTERRFVEVPSWATSAKITLRSTNKDEMDRFTLHTVYIEDDKCSRNTETQKIQGPIGNEWSKSITVQGGKTLEACVVRAWSRGKNPVDVDMTIDFFGVKKPTSISLIHGATNTPIRFQAAPTKSIDVSPSISLKSLVVSLKPQSAKVEPLGPRDMFLTSGLQINRLLLTYQLKVQKPSEVQLQLAGLTPYLYESPVDCVLFQIFGANKSFVGASSSYPDRWTQKLEKGDYTIQAQIRYPDDQVLQGMKELPLLVHVKLGNKISVDLAASASDATLGKECKFAGKALLPNQEMTVYAMNIADDKLPKTIVPTSGSFLAGTFSALKDSDLSDVDKSEVIYFLSEYSTRPTKGLSMVTTKKDTNQNQEMTDAIRDLEVSWVQKLTDEKAAKEFFEACLQKYPDHLPLLQNRVKQLMQAKLVDQTPENVQKIIELCGQILQITKPNETLQFSSVKQEHDDDLLTVDKWLALTGGSEDQRKDVVKLISQFEERKKSIILALQALSSLEQDIEVRKSKFDVPASLRFGGITPLIFGGKQGEVINKKSEGYEALKSKSEQIDATVSEELKKLDSNWTGNQFYVKLLVWLSADDTKTALISAKHAAALGQFGRCAKLLNKAGDELKSSATDSQAVDTSLAEVCESLEWNHLATHFKNSALIKNRTSYRLF.

In terms of domain architecture, Peptidase S8 spans 62–558 (ALLLNKTDTE…QGMIKIATAY (497 aa)). Active-site charge relay system residues include aspartate 93, histidine 314, and serine 499.

This sequence belongs to the peptidase S8 family. In terms of tissue distribution, expressed in intestinal fat-storing cells and some head neurons.

It catalyses the reaction Release of an N-terminal tripeptide from a polypeptide.. Its function is as follows. Component of the proteolytic cascade acting downstream of the 26S proteasome in the ubiquitin-proteasome pathway. Has a role in regulation of fat storage. The chain is Tripeptidyl-peptidase 2 (tpp-2) from Caenorhabditis elegans.